The primary structure comprises 312 residues: Beta-ketoacyl-[acyl-carrier-protein] synthase III (312 aa).

Catalysis depends on residues Cys-112 and His-237. Positions 238 to 242 (QANIR) are ACP-binding. Asn-267 is an active-site residue.

Belongs to the thiolase-like superfamily. FabH family. In terms of assembly, homodimer.

It is found in the cytoplasm. It carries out the reaction (2S)-2-methylbutanoyl-CoA + malonyl-[ACP] + H(+) = (4S)-4-methyl-3-oxohexanoyl-[ACP] + CO2 + CoA. The enzyme catalyses 2-methylpropanoyl-CoA + malonyl-[ACP] + H(+) = 4-methyl-3-oxopentanoyl-[ACP] + CO2 + CoA. It catalyses the reaction 3-methylbutanoyl-CoA + malonyl-[ACP] + H(+) = 5-methyl-3-oxohexanoyl-[ACP] + CO2 + CoA. The catalysed reaction is malonyl-[ACP] + acetyl-CoA + H(+) = 3-oxobutanoyl-[ACP] + CO2 + CoA. Its pathway is lipid metabolism; fatty acid biosynthesis. In terms of biological role, catalyzes the condensation reaction of fatty acid synthesis by the addition to an acyl acceptor of two carbons from malonyl-ACP. Catalyzes the first condensation reaction which initiates fatty acid synthesis and may therefore play a role in governing the total rate of fatty acid production. Possesses both acetoacetyl-ACP synthase and acetyl transacylase activities. Can use branched-chain acyl-CoAs, with a preference for 2-methylbutanoyl-CoA, the precursor of odd-numbered anteiso fatty acids, at 30 degrees Celsius, which is further increased at a low temperature. Shows weak activity with acetyl-CoA. This Listeria monocytogenes serotype 1/2a (strain 10403S) protein is Beta-ketoacyl-[acyl-carrier-protein] synthase III.